The primary structure comprises 521 residues: Acetyl-CoA hydrolase (521 aa).

276–280 (GIGNI) serves as a coordination point for CoA. The 5-glutamyl coenzyme A thioester intermediate role is filled by glutamate 301. The CoA site is built by asparagine 391 and glycine 395.

Belongs to the acetyl-CoA hydrolase/transferase family.

Its subcellular location is the cytoplasm. The enzyme catalyses acetyl-CoA + H2O = acetate + CoA + H(+). Presumably involved in regulating the intracellular acetyl-CoA pool for fatty acid and cholesterol synthesis and fatty acid oxidation. This chain is Acetyl-CoA hydrolase (ach1), found in Schizosaccharomyces pombe (strain 972 / ATCC 24843) (Fission yeast).